The primary structure comprises 474 residues: Photosystem II CP43 reaction center protein (474 aa).

A propeptide spanning residues 1-14 is cleaved from the precursor; the sequence is MKTLYSLRRFYPVE. Thr-15 carries the post-translational modification N-acetylthreonine. Phosphothreonine is present on Thr-15. 5 helical membrane passes run 69 to 93, 134 to 155, 178 to 201, 256 to 276, and 292 to 313; these read LFEV…PHLA, LLGP…KDRN, KALY…RKIT, KPFA…LSYS, and WFNN…ASQA. Residue Glu-368 coordinates [CaMn4O5] cluster. Residues 448 to 472 traverse the membrane as a helical segment; it reads RARAAAAGFEKGIDRDFEPVLSMTP.

It belongs to the PsbB/PsbC family. PsbC subfamily. As to quaternary structure, PSII is composed of 1 copy each of membrane proteins PsbA, PsbB, PsbC, PsbD, PsbE, PsbF, PsbH, PsbI, PsbJ, PsbK, PsbL, PsbM, PsbT, PsbX, PsbY, PsbZ, Psb30/Ycf12, at least 3 peripheral proteins of the oxygen-evolving complex and a large number of cofactors. It forms dimeric complexes. The cofactor is Binds multiple chlorophylls and provides some of the ligands for the Ca-4Mn-5O cluster of the oxygen-evolving complex. It may also provide a ligand for a Cl- that is required for oxygen evolution. PSII binds additional chlorophylls, carotenoids and specific lipids..

The protein resides in the plastid. It is found in the chloroplast thylakoid membrane. Functionally, one of the components of the core complex of photosystem II (PSII). It binds chlorophyll and helps catalyze the primary light-induced photochemical processes of PSII. PSII is a light-driven water:plastoquinone oxidoreductase, using light energy to abstract electrons from H(2)O, generating O(2) and a proton gradient subsequently used for ATP formation. In Citrus sinensis (Sweet orange), this protein is Photosystem II CP43 reaction center protein.